A 428-amino-acid polypeptide reads, in one-letter code: G2/mitotic-specific cyclin-1 (428 aa).

The disordered stretch occupies residues 1–22; that stretch reads MKFSEEKNVSNNPTNFEGGLDS.

Belongs to the cyclin family. Cyclin AB subfamily. Interacts with the CDC2 protein kinase to form a serine/threonine kinase holoenzyme complex also known as maturation promoting factor (MPF). The cyclin subunit imparts substrate specificity to the complex.

Essential for the control of the cell cycle at the G2/M (mitosis) transition. The sequence is that of G2/mitotic-specific cyclin-1 from Medicago sativa subsp. varia (Alfalfa).